A 436-amino-acid chain; its full sequence is GTPase Der (436 aa).

EngA-type G domains lie at 4–167 (PTVA…PTEV) and 175–351 (IRFS…ESQN). Residues 10-17 (GRPNVGKS), 57-61 (DTGGI), 119-122 (NKVD), 181-188 (GRPNVGKS), 229-233 (DTAGM), and 294-297 (NKWD) each bind GTP. The region spanning 352 to 436 (RRISSAVLND…PIHLIARKRK (85 aa)) is the KH-like domain.

Belongs to the TRAFAC class TrmE-Era-EngA-EngB-Septin-like GTPase superfamily. EngA (Der) GTPase family. Associates with the 50S ribosomal subunit.

GTPase that plays an essential role in the late steps of ribosome biogenesis. In Streptococcus thermophilus (strain ATCC BAA-491 / LMD-9), this protein is GTPase Der.